A 615-amino-acid chain; its full sequence is MSKKFAHTQEELEKLSLKELENLAASMREKIIQVVSKNGGHLSSNLGAVELSIAMHLVFDAKKDPFIFDVSHQSYTHKLLSGKEEIFDTLRQINGLSGYTKPSEGDYFVAGHSSTSISLAVGACKAIALKGEKRIPVALIGDGALSAGMAYEALNELGDSKFPCVILLNDNEMSISKPIGAISKYLSQAMATQFYQSFKKRIAKMLDILPDSATYMAKRFEESFKLITPGLLFEELGLEYIGPIDGHNLGEIISALKQAKAMQKPCVIHAQTIKGKGYALAEGKHAKWHGVGAFDIDSGESVKKSDTKKSATEIFSKNLLDLASKYENIVGVTAAMPSGTGLDKLIEKYPNRFWDVAIAEQHAVTSMAAMAKEGFKPFIAIYSTFLQRAYDQVIHDCAIMNLNVVFAMDRAGIVGEDGETHQGVFDLSFLAPLPNFTLLAPRDEQMMQNIMEYAYLHQGPIALRYPRGSFILDKEFNPCEIKLGKAQWLVKNNSEIAFLGYGQGVAKAWQVLRALQEMNNNANLIDLIFAKPLDEELLCELAKKSKIWFIFSENVKIGGIESLINNFLQKYDLHVKVVSFEYEDKFIEHGKTSEVEKNLEKDVNSLLTKVLKFYH.

Thiamine diphosphate-binding positions include His72 and 111–113 (GHS). Asp142 serves as a coordination point for Mg(2+). Thiamine diphosphate contacts are provided by residues 143–144 (GA), Asn171, Tyr278, and Glu360. Position 171 (Asn171) interacts with Mg(2+).

Belongs to the transketolase family. DXPS subfamily. As to quaternary structure, homodimer. Mg(2+) is required as a cofactor. Thiamine diphosphate serves as cofactor.

The enzyme catalyses D-glyceraldehyde 3-phosphate + pyruvate + H(+) = 1-deoxy-D-xylulose 5-phosphate + CO2. It participates in metabolic intermediate biosynthesis; 1-deoxy-D-xylulose 5-phosphate biosynthesis; 1-deoxy-D-xylulose 5-phosphate from D-glyceraldehyde 3-phosphate and pyruvate: step 1/1. Catalyzes the acyloin condensation reaction between C atoms 2 and 3 of pyruvate and glyceraldehyde 3-phosphate to yield 1-deoxy-D-xylulose-5-phosphate (DXP). This is 1-deoxy-D-xylulose-5-phosphate synthase from Campylobacter jejuni subsp. jejuni serotype O:2 (strain ATCC 700819 / NCTC 11168).